The chain runs to 262 residues: Ribosomal RNA small subunit methyltransferase A (262 aa).

Positions 13, 15, 40, 61, 85, and 103 each coordinate S-adenosyl-L-methionine.

The protein belongs to the class I-like SAM-binding methyltransferase superfamily. rRNA adenine N(6)-methyltransferase family. RsmA subfamily.

The protein resides in the cytoplasm. The catalysed reaction is adenosine(1518)/adenosine(1519) in 16S rRNA + 4 S-adenosyl-L-methionine = N(6)-dimethyladenosine(1518)/N(6)-dimethyladenosine(1519) in 16S rRNA + 4 S-adenosyl-L-homocysteine + 4 H(+). Specifically dimethylates two adjacent adenosines (A1518 and A1519) in the loop of a conserved hairpin near the 3'-end of 16S rRNA in the 30S particle. May play a critical role in biogenesis of 30S subunits. This Bordetella avium (strain 197N) protein is Ribosomal RNA small subunit methyltransferase A.